The sequence spans 95 residues: Phospholipase A2 inhibitor gammaCdcPLI (95 aa).

Disulfide bonds link Cys-2–Cys-26, Cys-5–Cys-12, Cys-19–Cys-30, and Cys-61–Cys-77.

As to quaternary structure, forms dimers or higher order oligomers in a temperature-dependent manner in vitro. Expressed by the liver.

The protein resides in the secreted. In terms of biological role, inhibits the enzymatic activity of basic and acidic PLA2 from B.jararacussu and B.pauloensis, respectively, in a dose-dependent manner. Also inhibits myotoxicity and cytotoxicity of BnSp-7 of B.pauloensis. The polypeptide is Phospholipase A2 inhibitor gammaCdcPLI (Crotalus durissus collilineatus (Brazilian rattlesnake)).